Reading from the N-terminus, the 242-residue chain is DnaJ homolog subfamily B member 3 (242 aa).

The J domain maps to 1–69 (MVDYYEVLGV…RKREVYDRCG (69 aa)).

In terms of tissue distribution, testis specific. Expression is confined to the germline without any contribution of the somatic components.

Its function is as follows. May operate as a co-chaperone of the male germ cell- and haploid stage-specific Hsp70 proteins. In Mus musculus (Mouse), this protein is DnaJ homolog subfamily B member 3 (Dnajb3).